A 294-amino-acid chain; its full sequence is Aspartate carbamoyltransferase catalytic subunit (294 aa).

Residues Arg49 and Thr50 each contribute to the carbamoyl phosphate site. Residue Lys77 participates in L-aspartate binding. The carbamoyl phosphate site is built by Arg99, His127, and Gln130. Residues Arg161 and Arg211 each contribute to the L-aspartate site. 2 residues coordinate carbamoyl phosphate: Gly250 and Pro251.

It belongs to the aspartate/ornithine carbamoyltransferase superfamily. ATCase family. In terms of assembly, heterododecamer (2C3:3R2) of six catalytic PyrB chains organized as two trimers (C3), and six regulatory PyrI chains organized as three dimers (R2).

The catalysed reaction is carbamoyl phosphate + L-aspartate = N-carbamoyl-L-aspartate + phosphate + H(+). It participates in pyrimidine metabolism; UMP biosynthesis via de novo pathway; (S)-dihydroorotate from bicarbonate: step 2/3. Functionally, catalyzes the condensation of carbamoyl phosphate and aspartate to form carbamoyl aspartate and inorganic phosphate, the committed step in the de novo pyrimidine nucleotide biosynthesis pathway. The chain is Aspartate carbamoyltransferase catalytic subunit from Sulfurovum sp. (strain NBC37-1).